Consider the following 138-residue polypeptide: Cysteine desulfuration protein SufE (138 aa).

Cysteine 51 (cysteine persulfide intermediate) is an active-site residue.

It belongs to the SufE family. As to quaternary structure, homodimer. Interacts with SufS.

The protein localises to the cytoplasm. It participates in cofactor biosynthesis; iron-sulfur cluster biosynthesis. Functionally, participates in cysteine desulfuration mediated by SufS. Cysteine desulfuration mobilizes sulfur from L-cysteine to yield L-alanine and constitutes an essential step in sulfur metabolism for biosynthesis of a variety of sulfur-containing biomolecules. Functions as a sulfur acceptor for SufS, by mediating the direct transfer of the sulfur atom from the S-sulfanylcysteine of SufS, an intermediate product of cysteine desulfuration process. In Citrobacter koseri (strain ATCC BAA-895 / CDC 4225-83 / SGSC4696), this protein is Cysteine desulfuration protein SufE.